Here is a 370-residue protein sequence, read N- to C-terminus: Putative agmatine deiminase (370 aa).

The Amidino-cysteine intermediate role is filled by Cys-361.

This sequence belongs to the agmatine deiminase family.

The catalysed reaction is agmatine + H2O = N-carbamoylputrescine + NH4(+). The polypeptide is Putative agmatine deiminase (Shewanella sp. (strain MR-4)).